The chain runs to 99 residues: Malonate decarboxylase acyl carrier protein (99 aa).

Ser25 carries the O-(phosphoribosyl dephospho-coenzyme A)serine modification.

Belongs to the MdcC family. Covalently binds the prosthetic group of malonate decarboxylase.

It localises to the cytoplasm. In terms of biological role, subunit of malonate decarboxylase, it is an acyl carrier protein to which acetyl and malonyl thioester residues are bound via a 2'-(5''-phosphoribosyl)-3'-dephospho-CoA prosthetic group and turn over during the catalytic mechanism. The protein is Malonate decarboxylase acyl carrier protein of Pseudomonas paraeruginosa (strain DSM 24068 / PA7) (Pseudomonas aeruginosa (strain PA7)).